The primary structure comprises 1142 residues: DNA-directed RNA polymerase subunit beta N-terminal section (1142 aa).

It belongs to the RNA polymerase beta chain family. In plastids the minimal PEP RNA polymerase catalytic core is composed of four subunits: alpha, beta, beta', and beta''. When a (nuclear-encoded) sigma factor is associated with the core the holoenzyme is formed, which can initiate transcription.

It is found in the plastid. Its subcellular location is the chloroplast. It catalyses the reaction RNA(n) + a ribonucleoside 5'-triphosphate = RNA(n+1) + diphosphate. Its function is as follows. DNA-dependent RNA polymerase catalyzes the transcription of DNA into RNA using the four ribonucleoside triphosphates as substrates. This Pleurastrum terricola (Filamentous green alga) protein is DNA-directed RNA polymerase subunit beta N-terminal section (rpoB1).